We begin with the raw amino-acid sequence, 379 residues long: Bifunctional riboflavin kinase/FMN phosphatase (379 aa).

Residue S2 is modified to N-acetylserine. Catalysis depends on D17, which acts as the Nucleophile; for FMN phosphatase activity. Residues D17 and D19 each coordinate Mg(2+). The Proton donor; for FMN phosphatase activity role is filled by D19. Residues G248, K254, T260, and N262 each contribute to the ATP site. T260 is a binding site for Mg(2+). E312 functions as the Nucleophile; for riboflavin kinase activity in the catalytic mechanism. ATP is bound by residues L315, H317, and Y324. The FMN site is built by R337 and F342.

This sequence in the N-terminal section; belongs to the HAD-like hydrolase superfamily. CbbY/CbbZ/Gph/YieH family. It in the C-terminal section; belongs to the flavokinase family. As to quaternary structure, monomer. Requires Mg(2+) as cofactor.

The enzyme catalyses riboflavin + ATP = FMN + ADP + H(+). The catalysed reaction is FMN + H2O = riboflavin + phosphate. The protein operates within cofactor biosynthesis; FMN biosynthesis; FMN from riboflavin (ATP route): step 1/1. In terms of biological role, bifunctional enzyme that catalyzes the hydrolysis of flavin-mononucleotide (FMN) to riboflavin (vitamin B2) and the phosphorylation of riboflavin to form (FMN) coenzyme. The polypeptide is Bifunctional riboflavin kinase/FMN phosphatase (Arabidopsis thaliana (Mouse-ear cress)).